The following is a 488-amino-acid chain: 3-octaprenyl-4-hydroxybenzoate carboxy-lyase (488 aa).

Residue Asn-172 coordinates Mn(2+). Prenylated FMN is bound by residues Ile-175–Arg-177, Arg-189–Leu-191, and Arg-194–Gly-195. Glu-238 is a Mn(2+) binding site. The active-site Proton donor is Asp-287.

It belongs to the UbiD family. As to quaternary structure, homohexamer. Requires prenylated FMN as cofactor. Mn(2+) serves as cofactor.

It is found in the cell membrane. It carries out the reaction a 4-hydroxy-3-(all-trans-polyprenyl)benzoate + H(+) = a 2-(all-trans-polyprenyl)phenol + CO2. Its pathway is cofactor biosynthesis; ubiquinone biosynthesis. Its function is as follows. Catalyzes the decarboxylation of 3-octaprenyl-4-hydroxy benzoate to 2-octaprenylphenol, an intermediate step in ubiquinone biosynthesis. The polypeptide is 3-octaprenyl-4-hydroxybenzoate carboxy-lyase (Pseudomonas fluorescens (strain SBW25)).